Reading from the N-terminus, the 259-residue chain is MIKHVLLFFVFISFSVSANDFFRADSRTPDEIRRAGGLLPRGQQEAYERGTPININLYEHARGTVTGNTRYNDGYVSTTVTLRQAHLIGQNILGSYNEYYIYVVAPAPNLFDVNGVLGRYSPYPSENEFAALGGIPLSQIIGWYRVSFGAIEGGMQRNRDYRGDLFRGLTVAPNEDGYQLAGFPSNFPAWREMPWSTFAPEQCVPNNKEFKGGVCISATNVLSKYDLMNFKKLLKRRLALTFFMSEDDFIGVHGERDEL.

Residues 1–18 (MIKHVLLFFVFISFSVSA) form the signal peptide. Residue 23–37 (RADSRTPDEIRRAGG) participates in NAD(+) binding. Glutamate 128 is a catalytic residue. An intrachain disulfide couples cysteine 203 to cysteine 215.

The protein belongs to the enterotoxin A family. Heterohexamer of one A chain and of five B chains.

Functionally, the biological activity of the toxin is produced by the A chain, which activates intracellular adenyl cyclase. In Escherichia coli, this protein is Heat-labile enterotoxin IIA, A chain.